The primary structure comprises 123 residues: Large ribosomal subunit protein bL12 (123 aa).

This sequence belongs to the bacterial ribosomal protein bL12 family. Homodimer. Part of the ribosomal stalk of the 50S ribosomal subunit. Forms a multimeric L10(L12)X complex, where L10 forms an elongated spine to which 2 to 4 L12 dimers bind in a sequential fashion. Binds GTP-bound translation factors.

Functionally, forms part of the ribosomal stalk which helps the ribosome interact with GTP-bound translation factors. Is thus essential for accurate translation. This is Large ribosomal subunit protein bL12 from Neisseria gonorrhoeae (strain NCCP11945).